A 347-amino-acid chain; its full sequence is Anthranilate phosphoribosyltransferase (347 aa).

5-phospho-alpha-D-ribose 1-diphosphate contacts are provided by residues Gly-88, 91–92, Thr-96, 98–101, 116–124, and Ser-128; these read GD, NIST, and KHGNRSVSS. Gly-88 is a binding site for anthranilate. Ser-100 provides a ligand contact to Mg(2+). Residue Asn-119 participates in anthranilate binding. Residue Arg-174 coordinates anthranilate. Mg(2+) is bound by residues Asp-232 and Glu-233.

The protein belongs to the anthranilate phosphoribosyltransferase family. As to quaternary structure, homodimer. The cofactor is Mg(2+).

It carries out the reaction N-(5-phospho-beta-D-ribosyl)anthranilate + diphosphate = 5-phospho-alpha-D-ribose 1-diphosphate + anthranilate. Its pathway is amino-acid biosynthesis; L-tryptophan biosynthesis; L-tryptophan from chorismate: step 2/5. Its function is as follows. Catalyzes the transfer of the phosphoribosyl group of 5-phosphorylribose-1-pyrophosphate (PRPP) to anthranilate to yield N-(5'-phosphoribosyl)-anthranilate (PRA). The chain is Anthranilate phosphoribosyltransferase from Shewanella sp. (strain MR-4).